Here is a 158-residue protein sequence, read N- to C-terminus: NAD(P)H-quinone oxidoreductase subunit J, chloroplastic (158 aa).

This sequence belongs to the complex I 30 kDa subunit family. As to quaternary structure, NDH is composed of at least 16 different subunits, 5 of which are encoded in the nucleus.

The protein localises to the plastid. Its subcellular location is the chloroplast thylakoid membrane. It carries out the reaction a plastoquinone + NADH + (n+1) H(+)(in) = a plastoquinol + NAD(+) + n H(+)(out). The catalysed reaction is a plastoquinone + NADPH + (n+1) H(+)(in) = a plastoquinol + NADP(+) + n H(+)(out). In terms of biological role, NDH shuttles electrons from NAD(P)H:plastoquinone, via FMN and iron-sulfur (Fe-S) centers, to quinones in the photosynthetic chain and possibly in a chloroplast respiratory chain. The immediate electron acceptor for the enzyme in this species is believed to be plastoquinone. Couples the redox reaction to proton translocation, and thus conserves the redox energy in a proton gradient. This Dioscorea elephantipes (Elephant's foot yam) protein is NAD(P)H-quinone oxidoreductase subunit J, chloroplastic.